The following is a 346-amino-acid chain: tRNA N6-adenosine threonylcarbamoyltransferase (346 aa).

Positions 111 and 115 each coordinate Fe cation. Substrate-binding positions include 134-138 (LVSGG), aspartate 167, glycine 180, aspartate 184, and asparagine 279. Aspartate 307 lines the Fe cation pocket.

Belongs to the KAE1 / TsaD family. Fe(2+) serves as cofactor.

It is found in the cytoplasm. It catalyses the reaction L-threonylcarbamoyladenylate + adenosine(37) in tRNA = N(6)-L-threonylcarbamoyladenosine(37) in tRNA + AMP + H(+). In terms of biological role, required for the formation of a threonylcarbamoyl group on adenosine at position 37 (t(6)A37) in tRNAs that read codons beginning with adenine. Is involved in the transfer of the threonylcarbamoyl moiety of threonylcarbamoyl-AMP (TC-AMP) to the N6 group of A37, together with TsaE and TsaB. TsaD likely plays a direct catalytic role in this reaction. This Nostoc sp. (strain PCC 7120 / SAG 25.82 / UTEX 2576) protein is tRNA N6-adenosine threonylcarbamoyltransferase.